The following is a 200-amino-acid chain: TATA-box-binding protein 2 (200 aa).

2 repeat units span residues 25–101 and 115–192.

The protein belongs to the TBP family. Belongs to the TFIID complex together with the TBP-associated factors (TAFs). Binds DNA as monomer. Interacts with TAF1 (via N-terminus). Interacts with TFIIB1. Interacts with PTF2. Interacts with HAT5/ATHB-1 and ATHB-7. Component of a nuclear protein complex containing at least TATA binding proteins (TBPs, e.g. TBP1 and TBP2) and ATX1.

The protein resides in the nucleus. Functionally, general transcription factor (GTF) that functions at the core of the DNA-binding multiprotein factor TFIID. Binding of TFIID to the TATA box is the initial transcriptional step of the pre-initiation complex (PIC), playing a role in the activation of eukaryotic genes transcribed by RNA polymerase II. Interacts with TFIIB1 and is required for activated transcription and possibly basal transcription. May act as GTF of RNA polymerase I-dependent transcription and rRNA synthesis. Forms a ternary complex with PBRP1 and the rDNA promoter region. The polypeptide is TATA-box-binding protein 2 (Arabidopsis thaliana (Mouse-ear cress)).